The sequence spans 439 residues: Diaminopimelate decarboxylase (439 aa).

Lysine 66 bears the N6-(pyridoxal phosphate)lysine mark. Residues glycine 248 and 290–293 (EPGR) contribute to the pyridoxal 5'-phosphate site. The substrate site is built by arginine 293, arginine 330, and tyrosine 334. Cysteine 361 serves as the catalytic Proton donor. 2 residues coordinate substrate: glutamate 362 and tyrosine 390. Tyrosine 390 contributes to the pyridoxal 5'-phosphate binding site.

It belongs to the Orn/Lys/Arg decarboxylase class-II family. LysA subfamily. In terms of assembly, homodimer. Pyridoxal 5'-phosphate is required as a cofactor.

It carries out the reaction meso-2,6-diaminopimelate + H(+) = L-lysine + CO2. Its pathway is amino-acid biosynthesis; L-lysine biosynthesis via DAP pathway; L-lysine from DL-2,6-diaminopimelate: step 1/1. Its function is as follows. Specifically catalyzes the decarboxylation of meso-diaminopimelate (meso-DAP) to L-lysine. This Bacillus subtilis (strain 168) protein is Diaminopimelate decarboxylase.